A 262-amino-acid polypeptide reads, in one-letter code: Acyl-[acyl-carrier-protein]--UDP-N-acetylglucosamine O-acyltransferase (262 aa).

This sequence belongs to the transferase hexapeptide repeat family. LpxA subfamily. Homotrimer.

It is found in the cytoplasm. The enzyme catalyses a (3R)-hydroxyacyl-[ACP] + UDP-N-acetyl-alpha-D-glucosamine = a UDP-3-O-[(3R)-3-hydroxyacyl]-N-acetyl-alpha-D-glucosamine + holo-[ACP]. It participates in glycolipid biosynthesis; lipid IV(A) biosynthesis; lipid IV(A) from (3R)-3-hydroxytetradecanoyl-[acyl-carrier-protein] and UDP-N-acetyl-alpha-D-glucosamine: step 1/6. Functionally, involved in the biosynthesis of lipid A, a phosphorylated glycolipid that anchors the lipopolysaccharide to the outer membrane of the cell. This chain is Acyl-[acyl-carrier-protein]--UDP-N-acetylglucosamine O-acyltransferase, found in Aliivibrio fischeri (strain ATCC 700601 / ES114) (Vibrio fischeri).